A 479-amino-acid polypeptide reads, in one-letter code: Glutamyl-tRNA(Gln) amidotransferase subunit A (479 aa).

Catalysis depends on charge relay system residues K75 and S150. The active-site Acyl-ester intermediate is the S174.

Belongs to the amidase family. GatA subfamily. As to quaternary structure, heterotrimer of A, B and C subunits.

It catalyses the reaction L-glutamyl-tRNA(Gln) + L-glutamine + ATP + H2O = L-glutaminyl-tRNA(Gln) + L-glutamate + ADP + phosphate + H(+). In terms of biological role, allows the formation of correctly charged Gln-tRNA(Gln) through the transamidation of misacylated Glu-tRNA(Gln) in organisms which lack glutaminyl-tRNA synthetase. The reaction takes place in the presence of glutamine and ATP through an activated gamma-phospho-Glu-tRNA(Gln). The sequence is that of Glutamyl-tRNA(Gln) amidotransferase subunit A from Synechococcus elongatus (strain ATCC 33912 / PCC 7942 / FACHB-805) (Anacystis nidulans R2).